We begin with the raw amino-acid sequence, 437 residues long: Protein PhoH2 (437 aa).

Residues 7-134 (RTYVLDTSVL…LVSKDIPLRV (128 aa)) form the PINc domain.

In the N-terminal section; belongs to the PINc/VapC protein family. It in the C-terminal section; belongs to the PhoH family. In terms of assembly, interacts with antitoxin PhoAT. The cofactor is Mg(2+).

The enzyme catalyses n ATP + n H2O + wound RNA = n ADP + n phosphate + unwound RNA.. It catalyses the reaction ATP + H2O = ADP + phosphate + H(+). It carries out the reaction GTP + H2O = GDP + phosphate + H(+). Its function is as follows. Toxic component of a type II toxin-antitoxin (TA) system. The possible cognate antitoxin is PhoAT; the toxin gene can be expressed in the absence of the antitoxin gene in an endogenous mc(2)155 double deletion. Unwinds and/or cleaves 5'-tailed RNA in vitro that starts with 5'-AC, the reaction requires hydrolyzable ATP; double-stranded (ds)RNA and dsDNA are not unwound or cleaved. Has ATPase and GTPase activities. This is Protein PhoH2 from Mycolicibacterium smegmatis (strain ATCC 700084 / mc(2)155) (Mycobacterium smegmatis).